Reading from the N-terminus, the 287-residue chain is Nucleotide-binding protein VV0445 (287 aa).

ATP is bound at residue 8-15 (GHSGAGKS). 56-59 (DVRN) is a GTP binding site.

It belongs to the RapZ-like family.

In terms of biological role, displays ATPase and GTPase activities. The protein is Nucleotide-binding protein VV0445 of Vibrio vulnificus (strain YJ016).